The chain runs to 404 residues: Probable tRNA sulfurtransferase (404 aa).

The 106-residue stretch at 60–165 (QPIVEALKLV…DEAAYISYEE (106 aa)) folds into the THUMP domain. ATP-binding positions include 183–184 (ML), 208–209 (HF), R265, G287, and Q296.

It belongs to the ThiI family.

It localises to the cytoplasm. It catalyses the reaction [ThiI sulfur-carrier protein]-S-sulfanyl-L-cysteine + a uridine in tRNA + 2 reduced [2Fe-2S]-[ferredoxin] + ATP + H(+) = [ThiI sulfur-carrier protein]-L-cysteine + a 4-thiouridine in tRNA + 2 oxidized [2Fe-2S]-[ferredoxin] + AMP + diphosphate. The enzyme catalyses [ThiS sulfur-carrier protein]-C-terminal Gly-Gly-AMP + S-sulfanyl-L-cysteinyl-[cysteine desulfurase] + AH2 = [ThiS sulfur-carrier protein]-C-terminal-Gly-aminoethanethioate + L-cysteinyl-[cysteine desulfurase] + A + AMP + 2 H(+). Its pathway is cofactor biosynthesis; thiamine diphosphate biosynthesis. Its function is as follows. Catalyzes the ATP-dependent transfer of a sulfur to tRNA to produce 4-thiouridine in position 8 of tRNAs, which functions as a near-UV photosensor. Also catalyzes the transfer of sulfur to the sulfur carrier protein ThiS, forming ThiS-thiocarboxylate. This is a step in the synthesis of thiazole, in the thiamine biosynthesis pathway. The sulfur is donated as persulfide by IscS. This chain is Probable tRNA sulfurtransferase, found in Streptococcus pyogenes serotype M49 (strain NZ131).